The sequence spans 154 residues: Superoxide dismutase [Cu-Zn] (154 aa).

Residues His-47, His-49, and His-64 each coordinate Cu cation. Cys-58 and Cys-147 are oxidised to a cystine. Residues His-64, His-72, His-81, and Asp-84 each coordinate Zn(2+). His-121 provides a ligand contact to Cu cation. The span at 124-137 shows a compositional bias: basic and acidic residues; that stretch reads TDDLGRGDSEESKK. The interval 124 to 144 is disordered; it reads TDDLGRGDSEESKKTGNAGAR. Arg-144 provides a ligand contact to substrate.

The protein belongs to the Cu-Zn superoxide dismutase family. In terms of assembly, homodimer. The cofactor is Cu cation. Zn(2+) serves as cofactor.

It is found in the cytoplasm. It carries out the reaction 2 superoxide + 2 H(+) = H2O2 + O2. Destroys radicals which are normally produced within the cells and which are toxic to biological systems. The polypeptide is Superoxide dismutase [Cu-Zn] (sodA) (Emericella nidulans (strain FGSC A4 / ATCC 38163 / CBS 112.46 / NRRL 194 / M139) (Aspergillus nidulans)).